A 518-amino-acid chain; its full sequence is Glutamate--cysteine ligase (518 aa).

Belongs to the glutamate--cysteine ligase type 1 family. Type 1 subfamily.

It catalyses the reaction L-cysteine + L-glutamate + ATP = gamma-L-glutamyl-L-cysteine + ADP + phosphate + H(+). Its pathway is sulfur metabolism; glutathione biosynthesis; glutathione from L-cysteine and L-glutamate: step 1/2. The polypeptide is Glutamate--cysteine ligase (Salmonella arizonae (strain ATCC BAA-731 / CDC346-86 / RSK2980)).